The following is a 213-amino-acid chain: Ribosome maturation factor RimM (213 aa).

Residues 99–175 (DQDAAYISDL…RITMRLPEGL (77 aa)) enclose the PRC barrel domain. A disordered region spans residues 182 to 213 (TATAREPRARRTRKRGLRKPITGADATPPDSQ). Over residues 189-199 (RARRTRKRGLR) the composition is skewed to basic residues.

This sequence belongs to the RimM family. Binds ribosomal protein uS19.

It localises to the cytoplasm. In terms of biological role, an accessory protein needed during the final step in the assembly of 30S ribosomal subunit, possibly for assembly of the head region. Essential for efficient processing of 16S rRNA. May be needed both before and after RbfA during the maturation of 16S rRNA. It has affinity for free ribosomal 30S subunits but not for 70S ribosomes. The chain is Ribosome maturation factor RimM from Acidobacterium capsulatum (strain ATCC 51196 / DSM 11244 / BCRC 80197 / JCM 7670 / NBRC 15755 / NCIMB 13165 / 161).